The following is a 261-amino-acid chain: Indole-3-glycerol phosphate synthase (261 aa).

It belongs to the TrpC family.

It carries out the reaction 1-(2-carboxyphenylamino)-1-deoxy-D-ribulose 5-phosphate + H(+) = (1S,2R)-1-C-(indol-3-yl)glycerol 3-phosphate + CO2 + H2O. The protein operates within amino-acid biosynthesis; L-tryptophan biosynthesis; L-tryptophan from chorismate: step 4/5. This chain is Indole-3-glycerol phosphate synthase, found in Campylobacter hominis (strain ATCC BAA-381 / DSM 21671 / CCUG 45161 / LMG 19568 / NCTC 13146 / CH001A).